The primary structure comprises 157 residues: ATP synthase subunit b (157 aa).

The helical transmembrane segment at 7–29 (MFGQLIMFTMFTWFCMKFVWPPI) threads the bilayer.

This sequence belongs to the ATPase B chain family. F-type ATPases have 2 components, F(1) - the catalytic core - and F(0) - the membrane proton channel. F(1) has five subunits: alpha(3), beta(3), gamma(1), delta(1), epsilon(1). F(0) has three main subunits: a(1), b(2) and c(10-14). The alpha and beta chains form an alternating ring which encloses part of the gamma chain. F(1) is attached to F(0) by a central stalk formed by the gamma and epsilon chains, while a peripheral stalk is formed by the delta and b chains.

It is found in the cell inner membrane. Its function is as follows. F(1)F(0) ATP synthase produces ATP from ADP in the presence of a proton or sodium gradient. F-type ATPases consist of two structural domains, F(1) containing the extramembraneous catalytic core and F(0) containing the membrane proton channel, linked together by a central stalk and a peripheral stalk. During catalysis, ATP synthesis in the catalytic domain of F(1) is coupled via a rotary mechanism of the central stalk subunits to proton translocation. Component of the F(0) channel, it forms part of the peripheral stalk, linking F(1) to F(0). The protein is ATP synthase subunit b of Ruthia magnifica subsp. Calyptogena magnifica.